Here is a 148-residue protein sequence, read N- to C-terminus: Endothelial differentiation-related factor 1 homolog (148 aa).

The interval 1–26 (MAESDWDTVTVLRKKGPSAAQAKSKQ) is disordered. Positions 81–135 (IQQGRQSKGMTQKDLATKINEKPQVIADYESGRAIPNNQVMGKIERAIGLKLRGK) constitute an HTH cro/C1-type domain. Residues 92 to 111 (QKDLATKINEKPQVIADYES) constitute a DNA-binding region (H-T-H motif).

It is found in the nucleus. Probable transcriptional coactivator. The polypeptide is Endothelial differentiation-related factor 1 homolog (EDF1) (Gallus gallus (Chicken)).